The chain runs to 200 residues: Small ribosomal subunit protein uS4 (200 aa).

The tract at residues 22-42 is disordered; the sequence is TGKELEKRPYAPGPHGPNQRK. Residues 92-152 form the S4 RNA-binding domain; sequence ARLDNLVYRM…EKSRNLAVIK (61 aa).

This sequence belongs to the universal ribosomal protein uS4 family. Part of the 30S ribosomal subunit. Contacts protein S5. The interaction surface between S4 and S5 is involved in control of translational fidelity.

Its function is as follows. One of the primary rRNA binding proteins, it binds directly to 16S rRNA where it nucleates assembly of the body of the 30S subunit. In terms of biological role, with S5 and S12 plays an important role in translational accuracy. The protein is Small ribosomal subunit protein uS4 of Bacillus cytotoxicus (strain DSM 22905 / CIP 110041 / 391-98 / NVH 391-98).